We begin with the raw amino-acid sequence, 550 residues long: Dihydroxy-acid dehydratase (550 aa).

Position 78 (Asp78) interacts with Mg(2+). Cys119 serves as a coordination point for [2Fe-2S] cluster. 2 residues coordinate Mg(2+): Asp120 and Lys121. Lys121 bears the N6-carboxylysine mark. Residue Cys191 coordinates [2Fe-2S] cluster. Residue Glu440 participates in Mg(2+) binding. Ser466 (proton acceptor) is an active-site residue.

The protein belongs to the IlvD/Edd family. In terms of assembly, homodimer. The cofactor is [2Fe-2S] cluster. It depends on Mg(2+) as a cofactor.

The enzyme catalyses (2R)-2,3-dihydroxy-3-methylbutanoate = 3-methyl-2-oxobutanoate + H2O. The catalysed reaction is (2R,3R)-2,3-dihydroxy-3-methylpentanoate = (S)-3-methyl-2-oxopentanoate + H2O. Its pathway is amino-acid biosynthesis; L-isoleucine biosynthesis; L-isoleucine from 2-oxobutanoate: step 3/4. It participates in amino-acid biosynthesis; L-valine biosynthesis; L-valine from pyruvate: step 3/4. In terms of biological role, functions in the biosynthesis of branched-chain amino acids. Catalyzes the dehydration of (2R,3R)-2,3-dihydroxy-3-methylpentanoate (2,3-dihydroxy-3-methylvalerate) into 2-oxo-3-methylpentanoate (2-oxo-3-methylvalerate) and of (2R)-2,3-dihydroxy-3-methylbutanoate (2,3-dihydroxyisovalerate) into 2-oxo-3-methylbutanoate (2-oxoisovalerate), the penultimate precursor to L-isoleucine and L-valine, respectively. The sequence is that of Dihydroxy-acid dehydratase from Methanococcus maripaludis (strain C7 / ATCC BAA-1331).